Here is a 631-residue protein sequence, read N- to C-terminus: Guanylate-binding protein 4 (631 aa).

One can recognise a GB1/RHD3-type G domain in the interval S33–K283. Residues G43–S50 and D103–L107 each bind GTP. The stretch at I492–N592 forms a coiled coil.

The protein belongs to the TRAFAC class dynamin-like GTPase superfamily. GB1/RHD3 GTPase family. GB1 subfamily. As to quaternary structure, heterodimer with other family members, including GBP1, GBP2 and GBP5. Dimerization regulates subcellular location. Interacts with IRF7; preventing interaction between TRAF6 and IRF7, resulting in impaired TRAF6-mediated IRF7 ubiquitination. Mainly expressed in organs of the immune system, such as spleen and lymph nodes.

The protein resides in the golgi apparatus membrane. Its subcellular location is the cytoplasm. The protein localises to the nucleus. It localises to the perinuclear region. The enzyme catalyses GTP + H2O = GDP + phosphate + H(+). Interferon (IFN)-inducible GTPase that plays important roles in innate immunity against a diverse range of bacterial, viral and protozoan pathogens. Negatively regulates the antiviral response by inhibiting activation of IRF7 transcription factor. The protein is Guanylate-binding protein 4 of Mus musculus (Mouse).